A 383-amino-acid chain; its full sequence is L-lactate dehydrogenase (383 aa).

The FMN hydroxy acid dehydrogenase domain occupies 1-380 (MIIASTFDYR…TCESLVNTDA (380 aa)). Y24 is a binding site for substrate. Residues S106 and Q127 each contribute to the FMN site. Y129 is a binding site for substrate. T155 provides a ligand contact to FMN. Residue R164 coordinates substrate. K251 serves as a coordination point for FMN. H275 serves as the catalytic Proton acceptor. Residue R278 coordinates substrate. 306–330 (DSGVRSGLDVVRMIAQGADAVMIGR) contacts FMN.

This sequence belongs to the FMN-dependent alpha-hydroxy acid dehydrogenase family. Requires FMN as cofactor.

The protein localises to the cell inner membrane. It carries out the reaction (S)-lactate + A = pyruvate + AH2. Its function is as follows. Catalyzes the conversion of L-lactate to pyruvate. Is coupled to the respiratory chain. The sequence is that of L-lactate dehydrogenase from Bartonella tribocorum (strain CIP 105476 / IBS 506).